The sequence spans 344 residues: Thiamine thiazole synthase (344 aa).

Residues cysteine 90, glutamate 111–alanine 112, glycine 119, and valine 184 contribute to the substrate site. The residue at position 232 (cysteine 232) is a 2,3-didehydroalanine (Cys). Substrate contacts are provided by residues aspartate 234, histidine 249, methionine 301, and arginine 311–glycine 313.

It belongs to the THI4 family. In terms of assembly, homooctamer. Interacts with cyp-41. Requires Fe cation as cofactor. During the catalytic reaction, a sulfide is transferred from Cys-232 to a reaction intermediate, generating a dehydroalanine residue.

It localises to the cytoplasm. The protein resides in the nucleus. It carries out the reaction [ADP-thiazole synthase]-L-cysteine + glycine + NAD(+) = [ADP-thiazole synthase]-dehydroalanine + ADP-5-ethyl-4-methylthiazole-2-carboxylate + nicotinamide + 3 H2O + 2 H(+). Its function is as follows. Involved in biosynthesis of the thiamine precursor thiazole. Catalyzes the conversion of NAD and glycine to adenosine diphosphate 5-(2-hydroxyethyl)-4-methylthiazole-2-carboxylic acid (ADT), an adenylated thiazole intermediate. The reaction includes an iron-dependent sulfide transfer from a conserved cysteine residue of the protein to a thiazole intermediate. The enzyme can only undergo a single turnover, which suggests it is a suicide enzyme. May have additional roles in adaptation to various stress conditions and in DNA damage tolerance. This Neurospora crassa (strain ATCC 24698 / 74-OR23-1A / CBS 708.71 / DSM 1257 / FGSC 987) protein is Thiamine thiazole synthase.